We begin with the raw amino-acid sequence, 137 residues long: Probable S-adenosyl-L-methionine-binding protein MTH_1797 (137 aa).

The 130-residue stretch at 8-137 (IRPVGVVRSP…YYEDIDSLGF (130 aa)) folds into the TsaA-like domain. Residues 25–27 (PAQ), 63–64 (HL), Arg87, Leu97, and 117–120 (LDGS) each bind S-adenosyl-L-methionine.

The protein belongs to the tRNA methyltransferase O family.

This is Probable S-adenosyl-L-methionine-binding protein MTH_1797 from Methanothermobacter thermautotrophicus (strain ATCC 29096 / DSM 1053 / JCM 10044 / NBRC 100330 / Delta H) (Methanobacterium thermoautotrophicum).